Here is a 457-residue protein sequence, read N- to C-terminus: Adenylosuccinate synthetase isozyme 1 (457 aa).

The segment at 1–24 is disordered; that stretch reads MSGTRASNDRPPGTGGVKRGRLQQ. GTP contacts are provided by residues 42 to 48 and 70 to 72; these read GDEGKGK and GHT. Catalysis depends on Asp43, which acts as the Proton acceptor. Mg(2+) is bound by residues Asp43 and Gly70. Asp43 provides a ligand contact to substrate. Residues 43–46, 68–71, Thr163, Arg177, Asn256, Thr271, and Arg335 contribute to the IMP site; these read DEGK and NAGH. His71 acts as the Proton donor in catalysis. 331–337 is a substrate binding site; sequence VTTGRKR. Residues Arg337, 363-365, and 445-448 each bind GTP; these read KLD and GVGK.

This sequence belongs to the adenylosuccinate synthetase family. In terms of assembly, homodimer. It depends on Mg(2+) as a cofactor. High levels in muscle.

It localises to the cytoplasm. The protein resides in the membrane. It carries out the reaction IMP + L-aspartate + GTP = N(6)-(1,2-dicarboxyethyl)-AMP + GDP + phosphate + 2 H(+). Its pathway is purine metabolism; AMP biosynthesis via de novo pathway; AMP from IMP: step 1/2. Weakly inhibited by AMP non-competitively to all substrates. Inhibited by IMP non-competitively with respect to GTP. Inhibited by fructose 1,6-bisphosphate competitively with respect to IMP. Its function is as follows. Component of the purine nucleotide cycle (PNC), which interconverts IMP and AMP to regulate the nucleotide levels in various tissues, and which contributes to glycolysis and ammoniagenesis. Catalyzes the first committed step in the biosynthesis of AMP from IMP. The chain is Adenylosuccinate synthetase isozyme 1 (Adss1) from Mus musculus (Mouse).